A 160-amino-acid chain; its full sequence is Transcription antitermination protein NusB (160 aa).

This sequence belongs to the NusB family.

Involved in transcription antitermination. Required for transcription of ribosomal RNA (rRNA) genes. Binds specifically to the boxA antiterminator sequence of the ribosomal RNA (rrn) operons. This chain is Transcription antitermination protein NusB, found in Chlamydia pneumoniae (Chlamydophila pneumoniae).